Consider the following 360-residue polypeptide: MRTELFDFDLPAENIALRPVSPRDAARMLVVRPGAPLEDRIVRDLPALLAPGDQLVVNDTRVIAAQLTGRRIGRGLEPKIEATLIKRLDGARWQALVKPAKKLLPGDVVRFGHDGRVCLLGHLDATVEAKGDAGEVTLVFSFHGPVLDQAIAEVGATPLPPYIASKRAPDAQDIADYQTMFASNEGAVAAPTAGLHFTAELETALAACGVGLHRITLHVGAGTFLPVKAEDTSEHRMHAEWGTISSGTAEALNAARAAGGRIVAVGTTSLRLLESAARDDGRIAPFADETSIFITPGYRFRAVDVLMTNFHLPRSTLFMLVSAFCGLDTMQAAYAHAIRTGYRFYSYGDASLLFRNDITP.

This sequence belongs to the QueA family. As to quaternary structure, monomer.

The protein resides in the cytoplasm. It carries out the reaction 7-aminomethyl-7-carbaguanosine(34) in tRNA + S-adenosyl-L-methionine = epoxyqueuosine(34) in tRNA + adenine + L-methionine + 2 H(+). Its pathway is tRNA modification; tRNA-queuosine biosynthesis. In terms of biological role, transfers and isomerizes the ribose moiety from AdoMet to the 7-aminomethyl group of 7-deazaguanine (preQ1-tRNA) to give epoxyqueuosine (oQ-tRNA). In Rhodopseudomonas palustris (strain ATCC BAA-98 / CGA009), this protein is S-adenosylmethionine:tRNA ribosyltransferase-isomerase.